The sequence spans 428 residues: GTPase Obg (428 aa).

Residues 1–158 enclose the Obg domain; that stretch reads MFIDKAKVFI…LSIVLELKLL (158 aa). The OBG-type G domain occupies 159 to 331; the sequence is ADVGLLGFPN…VIKEAARMLK (173 aa). GTP contacts are provided by residues 165 to 172, 190 to 194, 212 to 215, 282 to 285, and 312 to 314; these read GFPNVGKS, FTTLK, DIPG, NKSD, and SAA. The Mg(2+) site is built by Ser172 and Thr192. The OCT domain maps to 345–428; sequence MYIPEEKRFT…LNDFEFEYLL (84 aa).

This sequence belongs to the TRAFAC class OBG-HflX-like GTPase superfamily. OBG GTPase family. As to quaternary structure, monomer. It depends on Mg(2+) as a cofactor.

The protein localises to the cytoplasm. An essential GTPase which binds GTP, GDP and possibly (p)ppGpp with moderate affinity, with high nucleotide exchange rates and a fairly low GTP hydrolysis rate. Plays a role in control of the cell cycle, stress response, ribosome biogenesis and in those bacteria that undergo differentiation, in morphogenesis control. The chain is GTPase Obg from Clostridium botulinum (strain Eklund 17B / Type B).